Reading from the N-terminus, the 275-residue chain is MEEVREGHALGGGMEADGPASLQELPPSPRSPSPPPSPPPLPSPPSLPSPAAPEAPELPEPAQPSEAHARQLLLEEWGPLSGGLELPQRLTWKLLLLRRPLYRNLLRSPNPEGINIYEPAPPTGPTQRPLETLGNFRGWYIRTEKLQQNQSWTVKQQCVDLLAEGLWEELLDDEQPAITVMDWFEDSRLDACVYELHVWLLAADRRTVIAQHHVAPRTSGRGPPGRWVQVSHVFRHYGPGVRFIHFLHKAKNRMEPGGLRRTRVTDSSVSVQLRE.

A disordered region spans residues 1–67; the sequence is MEEVREGHAL…LPEPAQPSEA (67 aa). A compositionally biased stretch (pro residues) spans 26-62; it reads PPSPRSPSPPPSPPPLPSPPSLPSPAAPEAPELPEPA. Residues Ser31, Ser37, and Ser49 each carry the phosphoserine modification. Positions 95–273 constitute an FBA domain; the sequence is LLLRRPLYRN…VTDSSVSVQL (179 aa).

In terms of tissue distribution, expressed in the esophagus, oral cavity, skin, tongue and reproductive organs.

The protein localises to the cytoplasm. Its function is as follows. Promotes cell proliferation. The protein is F-box only protein 50 (NCCRP1) of Homo sapiens (Human).